The chain runs to 346 residues: Dimethyladenosine transferase 1, mitochondrial (346 aa).

Residues 1–27 (MATQGVLAKYRLPPLPTIGEIIKLFNL) constitute a mitochondrion transit peptide. Residues asparagine 36, leucine 38, glycine 63, glutamate 85, lysine 86, aspartate 111, isoleucine 112, and asparagine 141 each contribute to the S-adenosyl-L-methionine site.

This sequence belongs to the class I-like SAM-binding methyltransferase superfamily. rRNA adenine N(6)-methyltransferase family. KsgA subfamily.

Its subcellular location is the mitochondrion. It catalyses the reaction adenosine(N)/adenosine(N+1) in rRNA + 4 S-adenosyl-L-methionine = N(6)-dimethyladenosine(N)/N(6)-dimethyladenosine(N+1) in rRNA + 4 S-adenosyl-L-homocysteine + 4 H(+). Its function is as follows. Mitochondrial methyltransferase which uses S-adenosyl methionine to dimethylate two highly conserved adjacent adenosine residues (A1583 and A1584) within the loop of helix 45 at the 3-prime end of 12S rRNA, thereby regulating the assembly or stability of the small subunit of the mitochondrial ribosome. Also required for basal transcription of mitochondrial DNA, probably via its interaction with POLRMT and TFAM. Stimulates transcription independently of the methyltransferase activity. The chain is Dimethyladenosine transferase 1, mitochondrial (tfb1m) from Xenopus tropicalis (Western clawed frog).